The chain runs to 509 residues: Maturase K (509 aa).

The protein belongs to the intron maturase 2 family. MatK subfamily.

The protein localises to the plastid. It is found in the chloroplast. In terms of biological role, usually encoded in the trnK tRNA gene intron. Probably assists in splicing its own and other chloroplast group II introns. The chain is Maturase K from Nicotiana plumbaginifolia (Leadwort-leaved tobacco).